We begin with the raw amino-acid sequence, 594 residues long: Trehalase (594 aa).

Residues 1–27 (MDFLNKKIQKILFICILSFLIVNLTKS) form the signal peptide. 4 N-linked (GlcNAc...) asparagine glycosylation sites follow: Asn-56, Asn-70, Asn-97, and Asn-166. Substrate is bound by residues Arg-190, 197–198 (WD), and Asn-234. Asn-242 carries an N-linked (GlcNAc...) asparagine glycan. 243–245 (RSQ) contributes to the substrate binding site. Residues Asn-261 and Asn-305 are each glycosylated (N-linked (GlcNAc...) asparagine). Residues 312–314 (RPE) and Gly-346 contribute to the substrate site. Residue Asp-348 is the Proton donor/acceptor of the active site. Asn-361, Asn-395, Asn-513, and Asn-537 each carry an N-linked (GlcNAc...) asparagine glycan. Glu-549 (proton donor/acceptor) is an active-site residue. Glu-564 is a binding site for substrate.

Belongs to the glycosyl hydrolase 37 family.

It carries out the reaction alpha,alpha-trehalose + H2O = alpha-D-glucose + beta-D-glucose. The chain is Trehalase (treh) from Dictyostelium discoideum (Social amoeba).